Reading from the N-terminus, the 534-residue chain is MKTKFLFITGGVVSSLGKGLAAASIGALMEARGLRVSMQKMDPYINVDPGTMSPFQHGEVFVTDDGAETDLDLGHYERYTSARLSQKSNFTTGQVYDSVIRKERRGDYLGGTVQVIPHITNEIKAKILANSKDVDVAIVEVGGTVGDIESLPFLEAIRQFRVERGRENVLYLHLTLVPYIPTAGELKTKPTQHSVKELREIGIQPDILLCRCDREIPRDMKAKIALFCNVSEEAVVTARDVECIYEVPIAYHEEGLDERIIDYLNIWTKAPDLTDWERIVRRFKEPESETTIAIVGKYVELTESYKSLSEALIHGGIANNCRVNLIYVDSESLERHGVGDTFKDVDGILVPGGFGHRGSEGKIAAIRYARENRIPFFGICLGMQMAVVEFARNVCGIDDCFSSEFKEDAANPVIHIMENQKKVTRKGGTMRLGAYPCQLVEGTLARRIFGTGDVEERHRHRYEFNNAYQERLEKGGLVISGVYRDVGLVEIVEIEDHPWFLGCQFHPEFRSRPMEPHPLFESFVGASLKHHGEA.

An amidoligase domain region spans residues 1–266 (MKTKFLFITG…DERIIDYLNI (266 aa)). Ser-14 is a CTP binding site. A UTP-binding site is contributed by Ser-14. ATP is bound by residues 15 to 20 (SLGKGL) and Asp-72. Mg(2+) contacts are provided by Asp-72 and Glu-140. CTP is bound by residues 147 to 149 (DIE), 187 to 192 (KTKPTQ), and Lys-223. UTP-binding positions include 187–192 (KTKPTQ) and Lys-223. An ATP-binding site is contributed by 239 to 241 (RDV). A Glutamine amidotransferase type-1 domain is found at 291–533 (TIAIVGKYVE…VGASLKHHGE (243 aa)). L-glutamine is bound at residue Gly-353. The active-site Nucleophile; for glutamine hydrolysis is Cys-380. L-glutamine is bound by residues 381–384 (LGMQ), Glu-404, and Arg-461. Residues His-506 and Glu-508 contribute to the active site.

Belongs to the CTP synthase family. In terms of assembly, homotetramer.

The catalysed reaction is UTP + L-glutamine + ATP + H2O = CTP + L-glutamate + ADP + phosphate + 2 H(+). The enzyme catalyses L-glutamine + H2O = L-glutamate + NH4(+). It catalyses the reaction UTP + NH4(+) + ATP = CTP + ADP + phosphate + 2 H(+). It participates in pyrimidine metabolism; CTP biosynthesis via de novo pathway; CTP from UDP: step 2/2. With respect to regulation, allosterically activated by GTP, when glutamine is the substrate; GTP has no effect on the reaction when ammonia is the substrate. The allosteric effector GTP functions by stabilizing the protein conformation that binds the tetrahedral intermediate(s) formed during glutamine hydrolysis. Inhibited by the product CTP, via allosteric rather than competitive inhibition. Its function is as follows. Catalyzes the ATP-dependent amination of UTP to CTP with either L-glutamine or ammonia as the source of nitrogen. Regulates intracellular CTP levels through interactions with the four ribonucleotide triphosphates. This chain is CTP synthase, found in Syntrophotalea carbinolica (strain DSM 2380 / NBRC 103641 / GraBd1) (Pelobacter carbinolicus).